A 407-amino-acid polypeptide reads, in one-letter code: Aurora kinase A-A (407 aa).

Basic and acidic residues predominate over residues 1–10; it reads MERAVKENHK. The segment at 1–130 is disordered; it reads MERAVKENHK…KTSAVPKEEG (130 aa). 2 stretches are compositionally biased toward polar residues: residues 67 to 77 and 84 to 110; these read ILSSQKPTTQI and QGHQSSKPQGPNENRNPQQTSHSSTPN. Positions 140–390 constitute a Protein kinase domain; the sequence is FEIGRPLGKG…LKGVLEHPWI (251 aa). Residues Lys150, Lys169, and 217–220 each bind ATP; that span reads LDYA. Catalysis depends on Asp263, which acts as the Proton acceptor. Residue Asp281 participates in ATP binding. Residues 287-300 form an activation segment region; it reads HAPSSRRTTLCGTL.

It belongs to the protein kinase superfamily. Ser/Thr protein kinase family. Aurora subfamily. Interacts with kif2c and kif11. Phosphorylated. Autophosphorylated on a serine residue. Highly expressed in ovary and testis.

It is found in the cytoplasm. The protein resides in the cytoskeleton. It localises to the spindle. The protein localises to the microtubule organizing center. Its subcellular location is the centrosome. It catalyses the reaction L-seryl-[protein] + ATP = O-phospho-L-seryl-[protein] + ADP + H(+). It carries out the reaction L-threonyl-[protein] + ATP = O-phospho-L-threonyl-[protein] + ADP + H(+). Functionally, mitotic serine/threonine kinases that contributes to the regulation of cell cycle progression. Associates with the centrosome and the spindle microtubules during mitosis and plays a critical role in various mitotic events including the establishment of mitotic spindle, centrosome duplication, centrosome separation as well as maturation, chromosomal alignment, spindle assembly checkpoint, and cytokinesis. Phosphorylates numerous target proteins. Important for microtubule formation and/or stabilization. This Xenopus laevis (African clawed frog) protein is Aurora kinase A-A (aurka-a).